The primary structure comprises 106 residues: Testis-specific basic protein Y 2 (106 aa).

It belongs to the VCX/VCY family. Interacts with MAP1S. Interacts with UBE3A (via HECT domain). As to expression, expressed exclusively in testis. Expressed in ejaculated spermatozoa of germ cell. Expressed in the nuclei of spermatogonia, spermatocytes, and round spermatids, except elongated spermatids (at protein level).

This Homo sapiens (Human) protein is Testis-specific basic protein Y 2 (BPY2).